The following is a 234-amino-acid chain: Putative lipoyltransferase 2, mitochondrial (234 aa).

A mitochondrion-targeting transit peptide spans 1–28; it reads MPFVRPLVTVVRAGRHSYSAGLQLQQRL. The 182-residue stretch at 39-220 folds into the BPL/LPL catalytic domain; that stretch reads AEFRNYLVLQ…SFAKVFECRL (182 aa). Residues 83–90, 150–152, and 163–165 each bind substrate; these read RGGLITFH, AIG, and GIG. Cys-181 (acyl-thioester intermediate) is an active-site residue.

The protein belongs to the LipB family.

It is found in the mitochondrion. The catalysed reaction is octanoyl-[ACP] + L-lysyl-[protein] = N(6)-octanoyl-L-lysyl-[protein] + holo-[ACP] + H(+). It participates in protein modification; protein lipoylation via endogenous pathway; protein N(6)-(lipoyl)lysine from octanoyl-[acyl-carrier-protein]: step 1/2. In terms of biological role, catalyzes the transfer of endogenously produced octanoic acid from octanoyl-acyl-carrier-protein onto the lipoyl domains of lipoate-dependent enzymes. Lipoyl-ACP can also act as a substrate although octanoyl-ACP is likely to be the physiological substrate. The chain is Putative lipoyltransferase 2, mitochondrial from Drosophila melanogaster (Fruit fly).